We begin with the raw amino-acid sequence, 167 residues long: Insertion element IS1 1 protein InsB (167 aa).

Belongs to the transposase 27 family.

Functionally, absolutely required for transposition of IS1. The protein is Insertion element IS1 1 protein InsB (insB1) of Escherichia coli (strain K12).